The primary structure comprises 500 residues: Protein nucleotidyltransferase YdiU (500 aa).

ATP-binding residues include Gly-96, Gly-98, Arg-99, Lys-119, Asp-131, Gly-132, Arg-182, and Arg-189. The Proton acceptor role is filled by Asp-258. Residues Asn-259 and Asp-268 each coordinate Mg(2+). Asp-268 serves as a coordination point for ATP.

Belongs to the SELO family. It depends on Mg(2+) as a cofactor. Requires Mn(2+) as cofactor.

It carries out the reaction L-seryl-[protein] + ATP = 3-O-(5'-adenylyl)-L-seryl-[protein] + diphosphate. It catalyses the reaction L-threonyl-[protein] + ATP = 3-O-(5'-adenylyl)-L-threonyl-[protein] + diphosphate. The enzyme catalyses L-tyrosyl-[protein] + ATP = O-(5'-adenylyl)-L-tyrosyl-[protein] + diphosphate. The catalysed reaction is L-histidyl-[protein] + UTP = N(tele)-(5'-uridylyl)-L-histidyl-[protein] + diphosphate. It carries out the reaction L-seryl-[protein] + UTP = O-(5'-uridylyl)-L-seryl-[protein] + diphosphate. It catalyses the reaction L-tyrosyl-[protein] + UTP = O-(5'-uridylyl)-L-tyrosyl-[protein] + diphosphate. Functionally, nucleotidyltransferase involved in the post-translational modification of proteins. It can catalyze the addition of adenosine monophosphate (AMP) or uridine monophosphate (UMP) to a protein, resulting in modifications known as AMPylation and UMPylation. This Rhizobium leguminosarum bv. trifolii (strain WSM2304) protein is Protein nucleotidyltransferase YdiU.